Consider the following 201-residue polypeptide: LexA repressor (201 aa).

A DNA-binding region (H-T-H motif) is located at residues 28–48 (RAEIANQLGFRSANAAEEHLK). Catalysis depends on for autocatalytic cleavage activity residues Ser-118 and Lys-155.

It belongs to the peptidase S24 family. As to quaternary structure, homodimer.

The catalysed reaction is Hydrolysis of Ala-|-Gly bond in repressor LexA.. Functionally, represses a number of genes involved in the response to DNA damage (SOS response), including recA and lexA. In the presence of single-stranded DNA, RecA interacts with LexA causing an autocatalytic cleavage which disrupts the DNA-binding part of LexA, leading to derepression of the SOS regulon and eventually DNA repair. The polypeptide is LexA repressor (Saccharophagus degradans (strain 2-40 / ATCC 43961 / DSM 17024)).